A 163-amino-acid polypeptide reads, in one-letter code: Pheromone-binding protein (163 aa).

The signal sequence occupies residues 1–22; the sequence is MMSVRLMLVVAVWLCLRVDASQ. 3 cysteine pairs are disulfide-bonded: C39-C74, C70-C129, and C117-C138.

The protein belongs to the PBP/GOBP family. In terms of tissue distribution, antenna.

This major soluble protein in olfactory sensilla of male moths might serve to solubilize the extremely hydrophobic pheromone molecules and to transport pheromone through the aqueous lymph to receptors located on olfactory cilia. The polypeptide is Pheromone-binding protein (Heliothis virescens (Tobacco budworm moth)).